Consider the following 123-residue polypeptide: uncharacterized protein (123 aa).

The chain crosses the membrane as a helical span at residues M1–T21.

The protein localises to the membrane. This is an uncharacterized protein from Methanocaldococcus jannaschii (strain ATCC 43067 / DSM 2661 / JAL-1 / JCM 10045 / NBRC 100440) (Methanococcus jannaschii).